Here is a 77-residue protein sequence, read N- to C-terminus: Small ribosomal subunit protein bS16 (77 aa).

Belongs to the bacterial ribosomal protein bS16 family.

This Helicobacter hepaticus (strain ATCC 51449 / 3B1) protein is Small ribosomal subunit protein bS16.